The following is a 287-amino-acid chain: Protease HtpX (287 aa).

2 helical membrane passes run 4–24 and 33–53; these read IFLLIVTNLAVLLVASIVMSI and GGLLVFAAIFGFGGAFISLAI. Position 139 (His139) interacts with Zn(2+). Residue Glu140 is part of the active site. His143 serves as a coordination point for Zn(2+). A run of 2 helical transmembrane segments spans residues 154–174 and 195–215; these read LIQGVVNTFVIFAARVVAGII and AVVFVLDMLFGILASIIVAYF. Glu220 lines the Zn(2+) pocket.

The protein belongs to the peptidase M48B family. The cofactor is Zn(2+).

It is found in the cell inner membrane. This chain is Protease HtpX, found in Shewanella oneidensis (strain ATCC 700550 / JCM 31522 / CIP 106686 / LMG 19005 / NCIMB 14063 / MR-1).